Consider the following 117-residue polypeptide: Large ribosomal subunit protein bL31B (117 aa).

The tract at residues 75–117 (KRFERKKEASPADTPPESDSTTENASVEKKAEKKRVTAKGSKK) is disordered. Residues 100–109 (SVEKKAEKKR) show a composition bias toward basic and acidic residues.

This sequence belongs to the bacterial ribosomal protein bL31 family. Type B subfamily. In terms of assembly, part of the 50S ribosomal subunit.

The polypeptide is Large ribosomal subunit protein bL31B (Protochlamydia amoebophila (strain UWE25)).